Consider the following 807-residue polypeptide: Lysyl oxidase homolog 3B (807 aa).

An N-terminal signal peptide occupies residues M1 to A24. 5 SRCR domains span residues F49 to K150, V175 to V288, T309 to N409, V419 to A470, and V476 to S579. Disulfide bonds link C75/C139, C88/C149, C119/C129, C207/C277, C220/C287, C254/C264, C334/C398, C347/C408, and C378/C388. N-linked (GlcNAc...) asparagine glycosylation occurs at N272. N392 is a glycosylation site (N-linked (GlcNAc...) asparagine). Intrachain disulfides connect C514–C578 and C547–C557. N-linked (GlcNAc...) asparagine glycosylation occurs at N536. N-linked (GlcNAc...) asparagine glycosylation is present at N679. The segment at residues K688 to Y724 is a cross-link (lysine tyrosylquinone (Lys-Tyr)). The residue at position 724 (Y724) is a 2',4',5'-topaquinone.

Belongs to the lysyl oxidase family. Requires Cu cation as cofactor. The cofactor is lysine tyrosylquinone residue. Post-translationally, the lysine tyrosylquinone cross-link (LTQ) is generated by condensation of the epsilon-amino group of a lysine with a topaquinone produced by oxidation of tyrosine.

The protein resides in the secreted. The protein localises to the extracellular space. It localises to the cytoplasm. Its subcellular location is the nucleus. It carries out the reaction L-lysyl-[protein] + O2 + H2O = (S)-2-amino-6-oxohexanoyl-[protein] + H2O2 + NH4(+). It catalyses the reaction N(6)-acetyl-L-lysyl-[protein] + O2 + H2O = acetamide + (S)-2-amino-6-oxohexanoyl-[protein] + H2O2. Functionally, protein-lysine 6-oxidase that mediates the oxidation of peptidyl lysine residues to allysine in target proteins. Catalyzes the post-translational oxidative deamination of peptidyl lysine residues in precursors of elastin and different types of collagens, a prerequisite in the formation of cross-links between collagens and elastin. Can mediate oxidation of lysine residues that are acetylated. Also able to catalyze deacetylation of lysine residues. Required for maturation of neural crest derived cartilage elements. The polypeptide is Lysyl oxidase homolog 3B (Danio rerio (Zebrafish)).